We begin with the raw amino-acid sequence, 735 residues long: MENIEEILKAHKLTMEDYEHIKKILGREPNLVEIGIFSAMWSEHCSYKSSKKYLKGFPTEAPWVIQGPGENAGVIDIGDGMAAVFKMESHNHPSFIEPYQGAATGVGGILRDVFTMGARPVANLNALRFGDVKREDEVGAHQRYLVRGVVAGIGGYGNCVGVPTIGGEVSFDECYNGNILVNAFSLGICKKDEIFYGRAEGVGNPVIYVGSKTGRDGLGGAVMSSDSFTEETKKLRPTVQVGDPFTEKLLLEACLELFKTDYVVGIQDMGAAGLTSSSFEMAGRAGSGMKMYLDKVPMREEGMTPYELMLSESQERMLICAKKGTEEKVLEIFRKWDLDAEIIGEVTDTGVMELYWHGEKVAEVPVAPVSEEAPELDRPTKRPEYLAYIKETSIDTVPHVEDQEAFEKLLGSLEVVNKAWVYEQYDSMVQTNTVKHPGTLDASVIRVKENGKAIAMSSKCNPRYCYIDPKGGAAAAVMAAGRNVAMSGARPLAITDCLNYGNPENPEVMWQFAQGTEGIKEACRALNTPVVSGNVSLYNETNGVSVYPTPTIAMVGLNDDANKVVPSYFQETNDVVYIIGDTEKEFGGSLYLKELFGKVAGELPKIDYEKELRLWNFVIEANNRGLLKAAKDVGVGGIAIALAKMAALGNKGFLGNFCFEDSREIFSETFSRALVEIDPKNMHALEELANEIGIHATPLGTVGGNRFQLCDIDMEMEKLKDIYFNTFKREIERDL.

The active site involves H44. ATP contacts are provided by Y47 and K86. Residue E88 participates in Mg(2+) binding. Substrate contacts are provided by residues 89 to 92 (SHNH) and R111. Catalysis depends on H90, which acts as the Proton acceptor. Mg(2+) is bound at residue D112. Q240 contributes to the substrate binding site. D268 provides a ligand contact to Mg(2+). 312–314 (ESQ) is a substrate binding site. D496 and G533 together coordinate ATP. Residue N534 participates in Mg(2+) binding. S536 contributes to the substrate binding site.

This sequence belongs to the FGAMS family. As to quaternary structure, monomer. Part of the FGAM synthase complex composed of 1 PurL, 1 PurQ and 2 PurS subunits.

It localises to the cytoplasm. It carries out the reaction N(2)-formyl-N(1)-(5-phospho-beta-D-ribosyl)glycinamide + L-glutamine + ATP + H2O = 2-formamido-N(1)-(5-O-phospho-beta-D-ribosyl)acetamidine + L-glutamate + ADP + phosphate + H(+). It participates in purine metabolism; IMP biosynthesis via de novo pathway; 5-amino-1-(5-phospho-D-ribosyl)imidazole from N(2)-formyl-N(1)-(5-phospho-D-ribosyl)glycinamide: step 1/2. Part of the phosphoribosylformylglycinamidine synthase complex involved in the purines biosynthetic pathway. Catalyzes the ATP-dependent conversion of formylglycinamide ribonucleotide (FGAR) and glutamine to yield formylglycinamidine ribonucleotide (FGAM) and glutamate. The FGAM synthase complex is composed of three subunits. PurQ produces an ammonia molecule by converting glutamine to glutamate. PurL transfers the ammonia molecule to FGAR to form FGAM in an ATP-dependent manner. PurS interacts with PurQ and PurL and is thought to assist in the transfer of the ammonia molecule from PurQ to PurL. The chain is Phosphoribosylformylglycinamidine synthase subunit PurL from Nitratiruptor sp. (strain SB155-2).